Reading from the N-terminus, the 420-residue chain is Tyrosine--tRNA ligase (420 aa).

Residue tyrosine 38 coordinates L-tyrosine. Positions proline 43–histidine 52 match the 'HIGH' region motif. Positions 169 and 173 each coordinate L-tyrosine. The short motif at lysine 231–serine 235 is the 'KMSKS' region element. Lysine 234 serves as a coordination point for ATP. An S4 RNA-binding domain is found at lysine 353–isoleucine 419.

The protein belongs to the class-I aminoacyl-tRNA synthetase family. TyrS type 1 subfamily. In terms of assembly, homodimer.

It localises to the cytoplasm. The enzyme catalyses tRNA(Tyr) + L-tyrosine + ATP = L-tyrosyl-tRNA(Tyr) + AMP + diphosphate + H(+). In terms of biological role, catalyzes the attachment of tyrosine to tRNA(Tyr) in a two-step reaction: tyrosine is first activated by ATP to form Tyr-AMP and then transferred to the acceptor end of tRNA(Tyr). The chain is Tyrosine--tRNA ligase from Lactobacillus acidophilus (strain ATCC 700396 / NCK56 / N2 / NCFM).